The following is a 162-amino-acid chain: Shikimate kinase (162 aa).

11–16 (GSGKSS) lines the ATP pocket. Serine 15 serves as a coordination point for Mg(2+). Residues aspartate 33, arginine 57, and glycine 80 each contribute to the substrate site. Residue arginine 116 coordinates ATP. Residue arginine 132 participates in substrate binding.

The protein belongs to the shikimate kinase family. Monomer. Mg(2+) is required as a cofactor.

The protein localises to the cytoplasm. It carries out the reaction shikimate + ATP = 3-phosphoshikimate + ADP + H(+). The protein operates within metabolic intermediate biosynthesis; chorismate biosynthesis; chorismate from D-erythrose 4-phosphate and phosphoenolpyruvate: step 5/7. Catalyzes the specific phosphorylation of the 3-hydroxyl group of shikimic acid using ATP as a cosubstrate. The chain is Shikimate kinase from Helicobacter pylori (strain J99 / ATCC 700824) (Campylobacter pylori J99).